Reading from the N-terminus, the 1585-residue chain is Sterol 3-beta-glucosyltransferase (1585 aa).

Residues methionine 1–proline 18 are compositionally biased toward pro residues. 3 disordered regions span residues methionine 1–phenylalanine 151, proline 177–threonine 225, and tyrosine 249–glycine 279. Polar residues-rich tracts occupy residues aspartate 65–threonine 92, aspartate 105–glutamate 123, and proline 132–glutamate 148. A compositionally biased stretch (acidic residues) spans tryptophan 178–isoleucine 194. The span at glutamate 255 to glutamate 273 shows a compositional bias: low complexity. One can recognise a GRAM 1 domain in the interval glutamate 387–proline 555. The region spanning leucine 438 to phenylalanine 530 is the PH domain. Disordered stretches follow at residues threonine 625–alanine 645 and aspartate 666–serine 852. The span at leucine 670–histidine 689 shows a compositional bias: basic and acidic residues. Polar residues-rich tracts occupy residues threonine 760–valine 785, asparagine 806–glutamate 817, and serine 827–lysine 840. A GRAM 2 domain is found at arginine 862 to lysine 933. 10 residues coordinate UDP-alpha-D-glucose: serine 1043, arginine 1044, aspartate 1046, isoleucine 1358, histidine 1360, histidine 1373, glycine 1377, threonine 1378, aspartate 1397, and glutamine 1398. Residues asparagine 1499–proline 1552 are disordered. Positions serine 1529–valine 1545 are enriched in low complexity.

It belongs to the glycosyltransferase 28 family.

Its subcellular location is the cytoplasm. The protein localises to the membrane. The enzyme catalyses a sterol + UDP-alpha-D-glucose = a sterol 3-beta-D-glucoside + UDP + H(+). The catalysed reaction is ergosterol + UDP-alpha-D-glucose = ergosteryl 3-beta-D-glucoside + UDP + H(+). Its function is as follows. Sterol glycosyltransferase responsible for the glycosylation of ergosterol to form ergosterol-glucoside. The protein is Sterol 3-beta-glucosyltransferase of Cryptococcus neoformans var. neoformans serotype D (strain B-3501A) (Filobasidiella neoformans).